The following is a 282-amino-acid chain: Large ribosomal subunit protein uL2 (282 aa).

Disordered stretches follow at residues 26-55 (KKSP…RHRG) and 218-266 (PHVR…HNKS). Residues 34-43 (LESQSHTAGR) show a composition bias toward polar residues. Residues 254-266 (TIGKKTRNKHNKS) are compositionally biased toward basic residues.

Belongs to the universal ribosomal protein uL2 family. In terms of assembly, part of the 50S ribosomal subunit. Forms a bridge to the 30S subunit in the 70S ribosome.

Functionally, one of the primary rRNA binding proteins. Required for association of the 30S and 50S subunits to form the 70S ribosome, for tRNA binding and peptide bond formation. It has been suggested to have peptidyltransferase activity; this is somewhat controversial. Makes several contacts with the 16S rRNA in the 70S ribosome. The sequence is that of Large ribosomal subunit protein uL2 from Pediococcus pentosaceus (strain ATCC 25745 / CCUG 21536 / LMG 10740 / 183-1w).